The following is a 310-amino-acid chain: Carbamate kinase (310 aa).

Belongs to the carbamate kinase family. Homodimer.

It localises to the cytoplasm. The enzyme catalyses hydrogencarbonate + NH4(+) + ATP = carbamoyl phosphate + ADP + H2O + H(+). Its pathway is amino-acid degradation; L-arginine degradation via ADI pathway. In Haemophilus influenzae (strain ATCC 51907 / DSM 11121 / KW20 / Rd), this protein is Carbamate kinase.